Consider the following 428-residue polypeptide: MLDTKYLRNELEFTKERLAARGFALDIDHLKALEEKRKSLQVATEELQASRNAISKSIGQAKSRGEDVAPIMAQVGNLGTELEAKKIELAALLEEINAIAMSVPNLPDESVPVGKDESENVEIRRWGEPRSFDFAVKDHVDLGETLGGLDFKSAVKITGSRFIVMKGQIARMHRALAQFMLDLHTIEHGYTEAYVPLLVNTDSLLGTGQLPKFSEDLFNLKPATEEGQALSLIPTAEVPVTNLVRDTILDEADLPIKITAHTACFRSEAGSYGKDTRGLIRQHQFDKVEMVQIVKPENSMDALEQMVGHAENVLKKLGLPYRTVVLCTGDMGFGAAKTYDIEVWLPAQNTYREISSCSNVKDFQARRMQARYRSKEDNKPALVHTLNGSGLAVGRTLVAILENYQNADGTVTVPEALRPYMGGIEQLG.

Residue 235-237 participates in L-serine binding; sequence TAE. 266–268 provides a ligand contact to ATP; that stretch reads RSE. Glu289 contributes to the L-serine binding site. 353–356 lines the ATP pocket; the sequence is EISS. L-serine is bound at residue Ser389.

This sequence belongs to the class-II aminoacyl-tRNA synthetase family. Type-1 seryl-tRNA synthetase subfamily. Homodimer. The tRNA molecule binds across the dimer.

The protein resides in the cytoplasm. It catalyses the reaction tRNA(Ser) + L-serine + ATP = L-seryl-tRNA(Ser) + AMP + diphosphate + H(+). The catalysed reaction is tRNA(Sec) + L-serine + ATP = L-seryl-tRNA(Sec) + AMP + diphosphate + H(+). The protein operates within aminoacyl-tRNA biosynthesis; selenocysteinyl-tRNA(Sec) biosynthesis; L-seryl-tRNA(Sec) from L-serine and tRNA(Sec): step 1/1. Catalyzes the attachment of serine to tRNA(Ser). Is also able to aminoacylate tRNA(Sec) with serine, to form the misacylated tRNA L-seryl-tRNA(Sec), which will be further converted into selenocysteinyl-tRNA(Sec). This chain is Serine--tRNA ligase, found in Shewanella amazonensis (strain ATCC BAA-1098 / SB2B).